Reading from the N-terminus, the 443-residue chain is Glutamate--tRNA ligase 2 (443 aa).

A 'HIGH' region motif is present at residues 7 to 17 (PSPTGYLHVGN). The short motif at 236-240 (KISKR) is the 'KMSKS' region element. Position 239 (Lys239) interacts with ATP.

The protein belongs to the class-I aminoacyl-tRNA synthetase family. Glutamate--tRNA ligase type 1 subfamily. Monomer.

The protein resides in the cytoplasm. It catalyses the reaction tRNA(Glu) + L-glutamate + ATP = L-glutamyl-tRNA(Glu) + AMP + diphosphate. In terms of biological role, catalyzes the attachment of glutamate to tRNA(Glu) in a two-step reaction: glutamate is first activated by ATP to form Glu-AMP and then transferred to the acceptor end of tRNA(Glu). This chain is Glutamate--tRNA ligase 2, found in Ehrlichia canis (strain Jake).